Reading from the N-terminus, the 63-residue chain is Bowman-birk type proteinase inhibitor (63 aa).

Disulfide bonds link Cys7–Cys61, Cys8–Cys23, Cys11–Cys57, Cys13–Cys21, Cys31–Cys38, Cys35–Cys50, and Cys40–Cys48.

Its function is as follows. Inhibits trypsin, chymotrypsin, plasmin and factor XIIa. Does not inhibit factor Xa, thrombin and plasma kallikrein. This chain is Bowman-birk type proteinase inhibitor, found in Amburana acreana (Cerejeira).